A 469-amino-acid polypeptide reads, in one-letter code: MTRPVRTRFAPSPTGFIHLGNIRSALYPWAFARKMKGTFVLRIEDTDVERSSQEAVDAILDGMQWLGLDFDEGPIYQMQRMDRYREVIAQMLEKGLAYPCYMSAEELDALRERQREAGLKPRYDGTWRPEPGKVLPEPPAGVKPVLRFRNPLTGTVVWDDAVKGRVEISNEELDDLVIARPDGTPIYNFCVVVDDMDMGITHVIRGDDHVNNTPRQINILNALGGEPPVYAHLPTVLNEQGEKMSKRHGAMSVMAYRDAGFLPEAVVNYLARLGWSHGDAEIFSREQFVEWFDLEHLGKSPAQYDHSKLSWLNAHYIKEADNARLAELAKPFLAALGIDDAAIATGPALEAVVGLMKDRATTVKEIAEGATMFYRVPAPEADALAQHVTDVVRPALADLVAALKAADWTKEAVSAALKATLGTHKLKMPQLAMPVRLLVAGTTHTPSIDAVLVLFGRDVVVSRIEAALA.

The short motif at 11–21 is the 'HIGH' region element; that stretch reads PSPTGFIHLGN. Residues 243-247 carry the 'KMSKS' region motif; sequence KMSKR. An ATP-binding site is contributed by Lys246.

Belongs to the class-I aminoacyl-tRNA synthetase family. Glutamate--tRNA ligase type 1 subfamily. In terms of assembly, monomer.

The protein resides in the cytoplasm. The catalysed reaction is tRNA(Glu) + L-glutamate + ATP = L-glutamyl-tRNA(Glu) + AMP + diphosphate. Its function is as follows. Catalyzes the attachment of glutamate to tRNA(Glu) in a two-step reaction: glutamate is first activated by ATP to form Glu-AMP and then transferred to the acceptor end of tRNA(Glu). In Burkholderia lata (strain ATCC 17760 / DSM 23089 / LMG 22485 / NCIMB 9086 / R18194 / 383), this protein is Glutamate--tRNA ligase.